The following is a 358-amino-acid chain: Methylthioribose-1-phosphate isomerase (358 aa).

Residues 54–56 (RGA), R96, and Q205 each bind substrate. D246 serves as the catalytic Proton donor. Position 256–257 (256–257 (NK)) interacts with substrate.

This sequence belongs to the eIF-2B alpha/beta/delta subunits family. MtnA subfamily.

The enzyme catalyses 5-(methylsulfanyl)-alpha-D-ribose 1-phosphate = 5-(methylsulfanyl)-D-ribulose 1-phosphate. The protein operates within amino-acid biosynthesis; L-methionine biosynthesis via salvage pathway; L-methionine from S-methyl-5-thio-alpha-D-ribose 1-phosphate: step 1/6. Catalyzes the interconversion of methylthioribose-1-phosphate (MTR-1-P) into methylthioribulose-1-phosphate (MTRu-1-P). This Pseudomonas syringae pv. syringae (strain B728a) protein is Methylthioribose-1-phosphate isomerase.